We begin with the raw amino-acid sequence, 193 residues long: UPF0301 protein Fphi_1754 (193 aa).

This sequence belongs to the UPF0301 (AlgH) family.

This is UPF0301 protein Fphi_1754 from Francisella philomiragia subsp. philomiragia (strain ATCC 25017 / CCUG 19701 / FSC 153 / O#319-036).